The primary structure comprises 600 residues: Elongation factor 4 (600 aa).

The tr-type G domain occupies 5 to 187; that stretch reads KYIRNFSIIA…AIINKLPSPK (183 aa). GTP is bound by residues 17–22 and 134–137; these read DHGKST and NKID.

This sequence belongs to the TRAFAC class translation factor GTPase superfamily. Classic translation factor GTPase family. LepA subfamily.

It is found in the cell inner membrane. The catalysed reaction is GTP + H2O = GDP + phosphate + H(+). Required for accurate and efficient protein synthesis under certain stress conditions. May act as a fidelity factor of the translation reaction, by catalyzing a one-codon backward translocation of tRNAs on improperly translocated ribosomes. Back-translocation proceeds from a post-translocation (POST) complex to a pre-translocation (PRE) complex, thus giving elongation factor G a second chance to translocate the tRNAs correctly. Binds to ribosomes in a GTP-dependent manner. The protein is Elongation factor 4 of Rickettsia typhi (strain ATCC VR-144 / Wilmington).